A 166-amino-acid chain; its full sequence is Large ribosomal subunit protein uL10 (166 aa).

Belongs to the universal ribosomal protein uL10 family. Part of the ribosomal stalk of the 50S ribosomal subunit. The N-terminus interacts with L11 and the large rRNA to form the base of the stalk. The C-terminus forms an elongated spine to which L12 dimers bind in a sequential fashion forming a multimeric L10(L12)X complex.

Forms part of the ribosomal stalk, playing a central role in the interaction of the ribosome with GTP-bound translation factors. This chain is Large ribosomal subunit protein uL10, found in Pseudomonas paraeruginosa (strain DSM 24068 / PA7) (Pseudomonas aeruginosa (strain PA7)).